The sequence spans 325 residues: MDINKQKTKWDISIFKNENFTLPVIKSPFNTYYNKYIDSVINDIEEWHRECCFLGREKLKGYIESKPYLFSAYYYCHLNEKVLPFIIKFVDMFSIYDDEYLEKTNCSEDVINQFLDKNYKDKNIYGVEWFKIVEGLKKYGNKQSVNKFLKEFEFFIKNVHSIHLKENANYTNINFEEYTNTRSIDFGFDLVVSAAIIDCEEPSKEIRESSLFLTLNTKSSIICVLVNDIYSFVKESKQPDTMNYVKIMANKKKSIQKALNHTNKIINNTLKEIISIENQIKMQYKENNLYQYIERLNSVISATIYLHQNHKRYSVHNKNYINKNN.

The short motif at 97 to 102 (DDEYLE) is the DDxx(x)D/E motif element. Residues 227-235 (NDIYSFVKE) carry the NDxxSxxxD/E motif motif.

Belongs to the terpene synthase family.

It catalyses the reaction (2E,6E)-farnesyl diphosphate = (E)-beta-farnesene + diphosphate. The catalysed reaction is (2E,6E)-farnesyl diphosphate = (3E,6E)-alpha-farnesene + diphosphate. The enzyme catalyses geranylgeranyl diphosphate + H2O = (S)-(+)-nephthenol + diphosphate. Its function is as follows. Terpene synthase that converts its substrate farnesyl diphosphate (FPP) into the sesquiterpenes (E)-beta-farnesene and (E,E)-alpha-farnesene. TPS11 also converts geranylgeranyl diphosphate (GGPP) into the diterpene (S)-nephthenol. The sequence is that of Terpene synthase 11 from Dictyostelium purpureum (Slime mold).